A 415-amino-acid chain; its full sequence is Alditol oxidase (415 aa).

The FAD-binding PCMH-type domain maps to 12–179 (ITYTAKEVHR…TALTLDLEPA (168 aa)). Pros-8alpha-FAD histidine is present on H46. FAD-binding positions include S106, S111, G114, 118 to 121 (TGTH), and V169. S106 contributes to the xylitol binding site. Xylitol contacts are provided by E317, R319, and T342. Residue R319 participates in FAD binding. H369 contacts FAD. Residue K372 coordinates xylitol.

Belongs to the oxygen-dependent FAD-linked oxidoreductase family. As to quaternary structure, monomer. FAD serves as cofactor.

It carries out the reaction an alditol + O2 = an aldose + H2O2. The enzyme catalyses xylitol + O2 = D-xylose + H2O2. The catalysed reaction is D-sorbitol + O2 = D-glucose + H2O2. Its function is as follows. Oxidase that performs selective oxidation of the terminal primary hydroxyl group of several alditols, with a reduction of O2 to H2O2. Shows highest activity on xylitol and D-sorbitol, and to a lesser extent, can also use galactitol, D-mannitol, and D-arabitol as substrates in vitro. Is not active on D-glucose, D-xylose, D-galactose, D-mannose, D-fructose, L-sorbose, L-fucose, myoinositol, glycerol, ethyl alcohol, and meso-erythritol. In Streptomyces sp. (strain IKD472 / FERM P-14339), this protein is Alditol oxidase.